The primary structure comprises 375 residues: Guanine nucleotide-binding protein subunit beta (375 aa).

WD repeat units follow at residues 63 to 93 (GHTG…IVWN), 105 to 135 (LPCA…SIYN), 154 to 185 (GHKG…VLWD), 202 to 233 (GHTA…RLWD), 246 to 276 (GHEG…RLFD), 293 to 323 (GDIP…YVWD), and 339 to 369 (SHEG…KIWA).

Belongs to the WD repeat G protein beta family. G proteins are composed of 3 units, alpha, beta and gamma.

Its function is as follows. Guanine nucleotide-binding proteins (G proteins) are involved as a modulator or transducer in various transmembrane signaling systems. The beta and gamma chains are required for the GTPase activity, for replacement of GDP by GTP, and for G protein-effector interaction. This Nicotiana tabacum (Common tobacco) protein is Guanine nucleotide-binding protein subunit beta.